A 124-amino-acid polypeptide reads, in one-letter code: S-adenosylmethionine decarboxylase proenzyme (124 aa).

The active-site Schiff-base intermediate with substrate; via pyruvic acid is S63. A Pyruvic acid (Ser); by autocatalysis modification is found at S63. The active-site Proton acceptor; for processing activity is H68. The active-site Proton donor; for catalytic activity is C83.

This sequence belongs to the prokaryotic AdoMetDC family. Type 1 subfamily. Heterotetramer of two alpha and two beta chains arranged as a dimer of alpha/beta heterodimers. Requires pyruvate as cofactor. Post-translationally, is synthesized initially as an inactive proenzyme. Formation of the active enzyme involves a self-maturation process in which the active site pyruvoyl group is generated from an internal serine residue via an autocatalytic post-translational modification. Two non-identical subunits are generated from the proenzyme in this reaction, and the pyruvate is formed at the N-terminus of the alpha chain, which is derived from the carboxyl end of the proenzyme. The post-translation cleavage follows an unusual pathway, termed non-hydrolytic serinolysis, in which the side chain hydroxyl group of the serine supplies its oxygen atom to form the C-terminus of the beta chain, while the remainder of the serine residue undergoes an oxidative deamination to produce ammonia and the pyruvoyl group blocking the N-terminus of the alpha chain.

The enzyme catalyses S-adenosyl-L-methionine + H(+) = S-adenosyl 3-(methylsulfanyl)propylamine + CO2. It functions in the pathway amine and polyamine biosynthesis; S-adenosylmethioninamine biosynthesis; S-adenosylmethioninamine from S-adenosyl-L-methionine: step 1/1. Its function is as follows. Catalyzes the decarboxylation of S-adenosylmethionine to S-adenosylmethioninamine (dcAdoMet), the propylamine donor required for the synthesis of the polyamines spermine and spermidine from the diamine putrescine. The protein is S-adenosylmethionine decarboxylase proenzyme of Geobacillus kaustophilus (strain HTA426).